The sequence spans 429 residues: MANVTVIGAQWGDEGKGKIVDWLADRADAVVRFQGGHNAGHTLVVDGTTYKLSLLPSGIVSGTLSIIGNGVVLDPWALKQEVEKLEGQGVTINDDNFAIADNCPLILPIHRDLDGLREAAAGTGKIGTTGRGIGPAYEDKVGRRAIRVCDLEHLDSLEPQLDRLCAHHDALRAGFEEPPVDRERLLGDLREIAPFVLRFAQPVWKRLKKVRKAGAKILFEGAQGVLLDVDHGTYPFVTSSNTVSGTAASGSGLGPGAAGFVLGIVKAYTTRVGSGPFPTELDDEIGQRLGERGHEFGTVTGRQRRVGWFDAVLVRQTCAISGVTGIALTKIDVLDGLDTVKICTGYRLNNNVYDYLPSHAASQAAVEPIYEEMEGWSESTAGARSFADLPANAVKYIQRIQELIECPVALVSTSPERDDTILMRDPFMD.

GTP is bound by residues 12–18 (GDEGKGK) and 40–42 (GHT). The active-site Proton acceptor is Asp-13. Residues Asp-13 and Gly-40 each contribute to the Mg(2+) site. Residues 13–16 (DEGK), 38–41 (NAGH), Thr-129, Arg-143, Gln-223, Thr-238, and Arg-302 each bind IMP. His-41 functions as the Proton donor in the catalytic mechanism. A substrate-binding site is contributed by 298 to 304 (TVTGRQR). Residues Arg-304, 330-332 (KID), and 412-414 (STS) each bind GTP.

This sequence belongs to the adenylosuccinate synthetase family. Homodimer. The cofactor is Mg(2+).

The protein localises to the cytoplasm. It carries out the reaction IMP + L-aspartate + GTP = N(6)-(1,2-dicarboxyethyl)-AMP + GDP + phosphate + 2 H(+). Its pathway is purine metabolism; AMP biosynthesis via de novo pathway; AMP from IMP: step 1/2. Functionally, plays an important role in the de novo pathway of purine nucleotide biosynthesis. Catalyzes the first committed step in the biosynthesis of AMP from IMP. This Erythrobacter litoralis (strain HTCC2594) protein is Adenylosuccinate synthetase.